The chain runs to 261 residues: 1-(5-phosphoribosyl)-5-[(5-phosphoribosylamino)methylideneamino] imidazole-4-carboxamide isomerase (261 aa).

Aspartate 8 serves as the catalytic Proton acceptor. The active-site Proton donor is the aspartate 130.

Belongs to the HisA/HisF family.

It localises to the cytoplasm. The enzyme catalyses 1-(5-phospho-beta-D-ribosyl)-5-[(5-phospho-beta-D-ribosylamino)methylideneamino]imidazole-4-carboxamide = 5-[(5-phospho-1-deoxy-D-ribulos-1-ylimino)methylamino]-1-(5-phospho-beta-D-ribosyl)imidazole-4-carboxamide. It participates in amino-acid biosynthesis; L-histidine biosynthesis; L-histidine from 5-phospho-alpha-D-ribose 1-diphosphate: step 4/9. This chain is 1-(5-phosphoribosyl)-5-[(5-phosphoribosylamino)methylideneamino] imidazole-4-carboxamide isomerase, found in Prosthecochloris aestuarii (strain DSM 271 / SK 413).